Here is a 318-residue protein sequence, read N- to C-terminus: L-lactate dehydrogenase (318 aa).

Residues Val-16, Asp-37, and Tyr-69 each coordinate NAD(+). Substrate is bound by residues Gln-86, Arg-92, and 124–127 (NPVD). Residues 122–124 (ASN) and Ser-147 contribute to the NAD(+) site. Residue 152–155 (DSAR) participates in substrate binding. His-179 functions as the Proton acceptor in the catalytic mechanism. A Phosphotyrosine modification is found at Tyr-223. Residue Thr-232 participates in substrate binding.

This sequence belongs to the LDH/MDH superfamily. LDH family. As to quaternary structure, homotetramer.

It is found in the cytoplasm. The enzyme catalyses (S)-lactate + NAD(+) = pyruvate + NADH + H(+). It functions in the pathway fermentation; pyruvate fermentation to lactate; (S)-lactate from pyruvate: step 1/1. Catalyzes the conversion of lactate to pyruvate. The protein is L-lactate dehydrogenase of Mycoplasma mycoides subsp. mycoides SC (strain CCUG 32753 / NCTC 10114 / PG1).